A 607-amino-acid polypeptide reads, in one-letter code: Autophagy-related protein 22-2 (607 aa).

Residues 1–29 (MTVAPPSPNSPAAELQQRPPRYPGEDTTP) form a disordered region. The chain crosses the membrane as a helical span at residues 41-61 (YGIAAEVFAVCGVGSFLPLTL). Asn89 carries N-linked (GlcNAc...) asparagine glycosylation. The next 3 membrane-spanning stretches (helical) occupy residues 119–139 (SFAM…LISF), 151–170 (TLLL…FVFI), and 188–208 (CLGS…ANDP). Residues 235-263 (SFSASDAESGPHPAAEAGSGTSSGPASPE) are disordered. Over residues 247-263 (PAAEAGSGTSSGPASPE) the composition is skewed to low complexity. 4 helical membrane-spanning segments follow: residues 274–294 (GVGL…SLLF), 307–327 (TLPL…FTMV), 379–399 (VLVF…VSGT), and 415–435 (VGLL…LWPV). Asn445 is a glycosylation site (N-linked (GlcNAc...) asparagine). The next 4 helical transmembrane spans lie at 450–470 (LCIA…IPVF), 485–507 (FPLA…SFFG), 519–541 (YALY…GMLI), and 550–570 (GFFF…IVNA). Residues 586-607 (KGHETEMSEQTEEAEGLLARGI) are disordered.

It belongs to the ATG22 family.

Its subcellular location is the vacuole membrane. Its function is as follows. Vacuolar effluxer which mediate the efflux of amino acids resulting from autophagic degradation. The release of autophagic amino acids allows the maintenance of protein synthesis and viability during nitrogen starvation. This chain is Autophagy-related protein 22-2 (atg22-2), found in Aspergillus oryzae (strain ATCC 42149 / RIB 40) (Yellow koji mold).